Consider the following 307-residue polypeptide: Thioredoxin-related transmembrane protein 2-B (307 aa).

The signal sequence occupies residues 1 to 19; the sequence is MALLTPLFAFLYHLPQVYK. Residues 20 to 111 lie on the Extracellular side of the membrane; the sequence is WLLKPYYIAS…VILFFRLDIR (92 aa). Residues 112–132 form a helical membrane-spanning segment; that stretch reads LGLLYLTLCIVFLMTCKPPLY. Positions 132 to 269 constitute a Thioredoxin domain; the sequence is YMGPEYIKYF…LYQKSKKLGK (138 aa). Residues 133 to 307 are Cytoplasmic-facing; sequence MGPEYIKYFS…AMDTESKKDK (175 aa). Residues 268-307 form a disordered region; the sequence is GKTKEKLERPSELVFSTVPEEEEPEAETISAMDTESKKDK. Positions 269-278 are enriched in basic and acidic residues; the sequence is KTKEKLERPS. Residues 304-307 carry the Di-lysine motif motif; sequence KKDK.

As to quaternary structure, monomer. Homodimer; disulfide-linked. Occurs in both reduced and oxidized monomeric form. Oxidative conditions increase homodimerization.

The protein localises to the endoplasmic reticulum membrane. It is found in the mitochondrion membrane. Endoplasmic reticulum and mitochondria-associated protein that probably functions as a regulator of cellular redox state and thereby regulates protein post-translational modification, protein folding and mitochondrial activity. This is Thioredoxin-related transmembrane protein 2-B (tmx2b) from Danio rerio (Zebrafish).